A 557-amino-acid chain; its full sequence is MAFNKRSRNITQGVARSPNRSMYYALGYQKEDFDKPMVGIANGHSTITPCNAGLQRLADAAIDAVKASDANPQVFGTPTISDGMSMGTEGMKYSLISREVIADCIETAAQGQWMDGVVVIGGCDKNMPGGMIALARTNVPGIYVYGGTIKPGNWKGKDLTIVSSFEAVGEFTAGRMSEEDFEGVERNACPSTGSCGGMYTANTMSSSFEALGMSLLYSSTMANPDQEKVDSAAESARVLVEAIKKDIKPRDIITRKSIENAVALIMATGGSTNAVLHYLAIAHSAEVEWTIDDFERIRRKVPVICNLKPSGQYVATDLHKAGGIPQVMKILLKAGLLHGDCLTITGRTLAEELEHVPDQPRADQDVIMPIEKALYAEGHLAILKGNLAEEGAVAKITGLKNPVITGPARVFEDEQSAMEAILADKINAGDVLVLRYLGPKGGPGMPEMLAPTSAIIGKGLGESVGFITDGRFSGGTWGMVVGHVAPEAYVGGNIALVREGDSITIDAHKLVLQVNVSDEELARRRAEWKQPVARYTRGVLAKFARLASTASKGAVTD.

Cys-50 lines the [2Fe-2S] cluster pocket. Asp-82 is a Mg(2+) binding site. Cys-123 contributes to the [2Fe-2S] cluster binding site. The Mg(2+) site is built by Asp-124 and Lys-125. N6-carboxylysine is present on Lys-125. Position 195 (Cys-195) interacts with [2Fe-2S] cluster. Glu-447 contacts Mg(2+). The Proton acceptor role is filled by Ser-473.

The protein belongs to the IlvD/Edd family. Homodimer. It depends on [2Fe-2S] cluster as a cofactor. The cofactor is Mg(2+).

The enzyme catalyses (2R)-2,3-dihydroxy-3-methylbutanoate = 3-methyl-2-oxobutanoate + H2O. The catalysed reaction is (2R,3R)-2,3-dihydroxy-3-methylpentanoate = (S)-3-methyl-2-oxopentanoate + H2O. It functions in the pathway amino-acid biosynthesis; L-isoleucine biosynthesis; L-isoleucine from 2-oxobutanoate: step 3/4. It participates in amino-acid biosynthesis; L-valine biosynthesis; L-valine from pyruvate: step 3/4. Functionally, functions in the biosynthesis of branched-chain amino acids. Catalyzes the dehydration of (2R,3R)-2,3-dihydroxy-3-methylpentanoate (2,3-dihydroxy-3-methylvalerate) into 2-oxo-3-methylpentanoate (2-oxo-3-methylvalerate) and of (2R)-2,3-dihydroxy-3-methylbutanoate (2,3-dihydroxyisovalerate) into 2-oxo-3-methylbutanoate (2-oxoisovalerate), the penultimate precursor to L-isoleucine and L-valine, respectively. This chain is Dihydroxy-acid dehydratase 1, found in Cupriavidus pinatubonensis (strain JMP 134 / LMG 1197) (Cupriavidus necator (strain JMP 134)).